Reading from the N-terminus, the 338-residue chain is Anthranilate phosphoribosyltransferase (338 aa).

5-phospho-alpha-D-ribose 1-diphosphate contacts are provided by residues Gly-81, 84–85 (GD), Thr-89, 91–94 (NIST), 109–117 (KHGNRNLSS), and Ala-121. Residue Gly-81 coordinates anthranilate. A Mg(2+)-binding site is contributed by Ser-93. Position 112 (Asn-112) interacts with anthranilate. Position 167 (Arg-167) interacts with anthranilate. 2 residues coordinate Mg(2+): Asp-226 and Glu-227.

The protein belongs to the anthranilate phosphoribosyltransferase family. Homodimer. The cofactor is Mg(2+).

It carries out the reaction N-(5-phospho-beta-D-ribosyl)anthranilate + diphosphate = 5-phospho-alpha-D-ribose 1-diphosphate + anthranilate. It participates in amino-acid biosynthesis; L-tryptophan biosynthesis; L-tryptophan from chorismate: step 2/5. In terms of biological role, catalyzes the transfer of the phosphoribosyl group of 5-phosphorylribose-1-pyrophosphate (PRPP) to anthranilate to yield N-(5'-phosphoribosyl)-anthranilate (PRA). The protein is Anthranilate phosphoribosyltransferase of Cereibacter sphaeroides (strain ATCC 17025 / ATH 2.4.3) (Rhodobacter sphaeroides).